Reading from the N-terminus, the 754-residue chain is LON peptidase N-terminal domain and RING finger protein 2 (754 aa).

TPR repeat units lie at residues 23–58 and 59–91; these read IAQRLEEGDEAFRAGDYEMAAELFRSMLAGLAQPDR and GLCLRLGDALARAGRLPEALGAFRGAARLGALR. The interval 112–136 is disordered; it reads PLSAENPGGEPEAPGEGGPAPEPRA. Positions 115–125 are enriched in low complexity; it reads AENPGGEPEAP. TPR repeat units follow at residues 197–230, 231–264, and 266–298; these read LRRLAGQARSLQRQQQPEAALLRCDQALELAPDD, NSLLLLRAELYLTMKNYEQALQDASAACQNEPLL, and KGHQVKAQALSGLGRSKEVLKEFLYCLALNPEC. The interval 398–439 is disordered; the sequence is GLKRQFPDDVEDAPDLNAPGKIPKKDLSLQRSPNSETEESQG. The span at 426–439 shows a compositional bias: polar residues; it reads LQRSPNSETEESQG. The stretch at 447–483 is one TPR 6 repeat; the sequence is FECALCMRLLFEPVTTPCGHTFCLKCLERCLDHAPHC. The segment at 449-487 adopts an RING-type zinc-finger fold; sequence CALCMRLLFEPVTTPCGHTFCLKCLERCLDHAPHCPLCK. In terms of domain architecture, Lon N-terminal spans 528–737; it reads MSELSNLTRD…AIRRILVIIT (210 aa).

This is LON peptidase N-terminal domain and RING finger protein 2 (LONRF2) from Homo sapiens (Human).